The chain runs to 80 residues: Serine palmitoyltransferase small subunit A (80 aa).

Residues Met1 to His21 are Cytoplasmic-facing. Residues Met22–Leu38 traverse the membrane as a helical segment. The Lumenal portion of the chain corresponds to Glu39–Arg43. Residues Thr44–Pro66 traverse the membrane as a helical segment. Residues Gln67–Gln80 lie on the Cytoplasmic side of the membrane.

This sequence belongs to the SPTSS family. SPTSSA subfamily. Component of the serine palmitoyltransferase (SPT) complex, which is composed of SPTLC1, SPTLC2 or SPTLC3 and SPTSSA or SPTSSB. The heterodimer consisting of SPTLC1 and SPTLC2/SPTLC3 forms the catalytic core of the enzyme, while SPTSSA or SPTSSB subunits determine substrate specificity. SPT also interacts with ORMDL proteins, especially ORMDL3, which negatively regulate SPT activity in the presence of ceramides.

The protein localises to the endoplasmic reticulum membrane. The protein operates within lipid metabolism; sphingolipid metabolism. Functionally, component of the serine palmitoyltransferase multisubunit enzyme (SPT) that catalyzes the initial and rate-limiting step in sphingolipid biosynthesis by condensing L-serine and activated acyl-CoA (most commonly palmitoyl-CoA) to form long-chain bases. The SPT complex is composed of SPTLC1, SPTLC2 or SPTLC3 and SPTSSA or SPTSSB. Within this complex, the heterodimer consisting of SPTLC1 and SPTLC2/SPTLC3 forms the catalytic core. Within the SPT complex, SPTSSA stimulates the catalytic activity and plays a role in substrate specificity, which depends upon the overall complex composition. The SPTLC1-SPTLC2-SPTSSA complex shows a strong preference for C16-CoA substrate, while the SPTLC1-SPTLC3-SPTSSA isozyme uses both C14-CoA and C16-CoA as substrates, with a slight preference for C14-CoA. Independently of its action as a SPT component, may be involved in MBOAT7 localization to mitochondria-associated membranes, a membrane bridge between the endoplasmic reticulum and mitochondria, may hence affect MBOAT7-catalyzed incorporation of arachidonic acid into phosphatidylinositol. The protein is Serine palmitoyltransferase small subunit A (sptssa) of Xenopus tropicalis (Western clawed frog).